A 128-amino-acid chain; its full sequence is Protein ApaG (128 aa).

Residues 1–123 enclose the ApaG domain; the sequence is MTSSPDITVS…FRLDIAPESG (123 aa).

This is Protein ApaG from Deinococcus radiodurans (strain ATCC 13939 / DSM 20539 / JCM 16871 / CCUG 27074 / LMG 4051 / NBRC 15346 / NCIMB 9279 / VKM B-1422 / R1).